The chain runs to 369 residues: Glutamine synthetase 2 cytoplasmic (369 aa).

Residues 32–112 enclose the GS beta-grasp domain; it reads VQATYVWIDG…VMCDTYKFDG (81 aa). In terms of domain architecture, GS catalytic spans 119-369; it reads KRKTCLEVAN…AILRTICLDE (251 aa).

This sequence belongs to the glutamine synthetase family. Homooctamer.

Its subcellular location is the cytoplasm. It carries out the reaction L-glutamate + NH4(+) + ATP = L-glutamine + ADP + phosphate + H(+). The polypeptide is Glutamine synthetase 2 cytoplasmic (Gs2) (Drosophila melanogaster (Fruit fly)).